A 356-amino-acid polypeptide reads, in one-letter code: Protein-glutamate methylesterase/protein-glutamine glutaminase 2 (356 aa).

Residues 7 to 124 (KVLCVDDSAL…RDGLMEYTDT (118 aa)) enclose the Response regulatory domain. The residue at position 58 (aspartate 58) is a 4-aspartylphosphate. The region spanning 157-349 (LLSTEKLIIL…QRVMARLATY (193 aa)) is the CheB-type methylesterase domain. Active-site residues include serine 169, histidine 195, and aspartate 291.

The protein belongs to the CheB family. Phosphorylated by CheA. Phosphorylation of the N-terminal regulatory domain activates the methylesterase activity.

It is found in the cytoplasm. It carries out the reaction [protein]-L-glutamate 5-O-methyl ester + H2O = L-glutamyl-[protein] + methanol + H(+). It catalyses the reaction L-glutaminyl-[protein] + H2O = L-glutamyl-[protein] + NH4(+). In terms of biological role, involved in chemotaxis. Part of a chemotaxis signal transduction system that modulates chemotaxis in response to various stimuli. Catalyzes the demethylation of specific methylglutamate residues introduced into the chemoreceptors (methyl-accepting chemotaxis proteins or MCP) by CheR. Also mediates the irreversible deamidation of specific glutamine residues to glutamic acid. This Cupriavidus pinatubonensis (strain JMP 134 / LMG 1197) (Cupriavidus necator (strain JMP 134)) protein is Protein-glutamate methylesterase/protein-glutamine glutaminase 2.